The sequence spans 289 residues: Poly-beta-1,6-N-acetyl-D-glucosamine N-deacetylase (289 aa).

Positions 1-30 (MKPFKLIFISALMILIMTNATPISHLNAQA) are cleaved as a signal peptide. Residues 113–289 (RSVWINFDDM…KEWDGFDEEK (177 aa)) enclose the NodB homology domain.

It belongs to the polysaccharide deacetylase family.

Its subcellular location is the secreted. It localises to the cell wall. Functionally, catalyzes the N-deacetylation of poly-beta-1,6-N-acetyl-D-glucosamine (PNAG, also referred to as PIA), a biofilm adhesin polysaccharide. In fact, the IcaB deacetylase converts 15 to 20% of the GlcNAc residues of PNAG to glucosamine. N-deacetylation is crucial for attachment of the polysaccharide to the bacterial cell surface; it leads to the introduction of positive charges in the otherwise neutral PIA polymer, allowing electrostatic interactions. Deacetylation of the polymer is also essential for key virulence mechanisms of S.epidermidis, namely biofilm formation, colonization, and resistance to neutrophil phagocytosis and human antibacterial peptides. This Staphylococcus epidermidis (strain ATCC 35984 / DSM 28319 / BCRC 17069 / CCUG 31568 / BM 3577 / RP62A) protein is Poly-beta-1,6-N-acetyl-D-glucosamine N-deacetylase (icaB).